The chain runs to 357 residues: Probable 3'(2'),5'-bisphosphate nucleotidase 3 (357 aa).

The active-site Proton acceptor is aspartate 46. 3 residues coordinate Mg(2+): glutamate 71, aspartate 135, and isoleucine 137. The active-site Proton acceptor is the threonine 140. Adenosine 3',5'-bisphosphate is bound by residues threonine 140, serine 256, lysine 259, and arginine 273. AMP is bound by residues serine 256, lysine 259, and arginine 273.

Belongs to the inositol monophosphatase superfamily. It depends on Mg(2+) as a cofactor.

It carries out the reaction 3'-phosphoadenylyl sulfate + H2O = adenosine 5'-phosphosulfate + phosphate. The enzyme catalyses adenosine 3',5'-bisphosphate + H2O = AMP + phosphate. It catalyses the reaction adenosine 2',5'-bisphosphate + H2O = AMP + phosphate. The catalysed reaction is 1D-myo-inositol 1,4-bisphosphate + H2O = 1D-myo-inositol 4-phosphate + phosphate. It carries out the reaction 1D-myo-inositol 1,3,4-trisphosphate + H2O = 1D-myo-inositol 3,4-bisphosphate + phosphate. Its pathway is signal transduction; phosphatidylinositol signaling pathway. Phosphatase that converts adenosine 3'-phosphate 5'-phosphosulfate (PAPS) to adenosine 5'-phosphosulfate (APS) and 3'(2')-phosphoadenosine 5'-phosphate (PAP) to AMP. Is also able to hydrolyze inositol 1,4-bisphosphate and inositol 1,3,4-trisphosphate. The protein is Probable 3'(2'),5'-bisphosphate nucleotidase 3 (SAL3) of Arabidopsis thaliana (Mouse-ear cress).